A 651-amino-acid polypeptide reads, in one-letter code: Acetyl-coenzyme A synthetase (651 aa).

CoA is bound by residues 189 to 192 (RGGK), T311, and N335. ATP contacts are provided by residues 387-389 (GEP), 411-416 (DTWWQT), D500, and R515. S523 provides a ligand contact to CoA. Residue R526 coordinates ATP. The Mg(2+) site is built by V537, H539, and V542. R584 serves as a coordination point for CoA. An N6-acetyllysine modification is found at K609.

Belongs to the ATP-dependent AMP-binding enzyme family. The cofactor is Mg(2+). Acetylated. Deacetylation by the SIR2-homolog deacetylase activates the enzyme.

The catalysed reaction is acetate + ATP + CoA = acetyl-CoA + AMP + diphosphate. Its function is as follows. Catalyzes the conversion of acetate into acetyl-CoA (AcCoA), an essential intermediate at the junction of anabolic and catabolic pathways. AcsA undergoes a two-step reaction. In the first half reaction, AcsA combines acetate with ATP to form acetyl-adenylate (AcAMP) intermediate. In the second half reaction, it can then transfer the acetyl group from AcAMP to the sulfhydryl group of CoA, forming the product AcCoA. This Agrobacterium fabrum (strain C58 / ATCC 33970) (Agrobacterium tumefaciens (strain C58)) protein is Acetyl-coenzyme A synthetase.